The chain runs to 302 residues: MTGPVPDARVIDGKAFAAGLRARIADAVPAFRAATGRAPGLAVVLVGDDPASAVYVGSKGKATVAAGMASFEHRLAATATQDEVEALLRQLNADEAVDGILLQLPLPGHLDEQAAVATIDPDKDVDGLTPVSAGRLALGIPGMVPCTPYGCLLLLQDRLGDLSGKDAIVIGRSILVGKPMGQLLLGANCTVTMAHSRTKDLPALVRRADIVVAAVGRAEMVKGDWIKPGAIVIDVGINRLPPADGAAKGRLVGDVDYAAALGVADAITPVPGGVGPMTIACLLRNTLVAAHRRAGLADPEGF.

Residues 171-173, S196, and I237 each bind NADP(+); that span reads GRS.

It belongs to the tetrahydrofolate dehydrogenase/cyclohydrolase family. In terms of assembly, homodimer.

The enzyme catalyses (6R)-5,10-methylene-5,6,7,8-tetrahydrofolate + NADP(+) = (6R)-5,10-methenyltetrahydrofolate + NADPH. It catalyses the reaction (6R)-5,10-methenyltetrahydrofolate + H2O = (6R)-10-formyltetrahydrofolate + H(+). It functions in the pathway one-carbon metabolism; tetrahydrofolate interconversion. Catalyzes the oxidation of 5,10-methylenetetrahydrofolate to 5,10-methenyltetrahydrofolate and then the hydrolysis of 5,10-methenyltetrahydrofolate to 10-formyltetrahydrofolate. This Sphingopyxis alaskensis (strain DSM 13593 / LMG 18877 / RB2256) (Sphingomonas alaskensis) protein is Bifunctional protein FolD.